The following is a 301-amino-acid chain: D-alanine--D-alanine ligase (301 aa).

One can recognise an ATP-grasp domain in the interval 99 to 294; it reads KCILKAANIR…FSELIDMIID (196 aa). An ATP-binding site is contributed by 126–181; that stretch reads IEGMGYPVVVKPTHGGSSVATFIIKEEKDIKNAVTEAFKWDSEVIIEKFIKGDEIT. Mg(2+) is bound by residues Asp-248, Glu-261, and Asn-263.

Belongs to the D-alanine--D-alanine ligase family. Requires Mg(2+) as cofactor. Mn(2+) is required as a cofactor.

The protein localises to the cytoplasm. The enzyme catalyses 2 D-alanine + ATP = D-alanyl-D-alanine + ADP + phosphate + H(+). The protein operates within cell wall biogenesis; peptidoglycan biosynthesis. Its function is as follows. Cell wall formation. This is D-alanine--D-alanine ligase from Clostridium botulinum (strain Eklund 17B / Type B).